We begin with the raw amino-acid sequence, 500 residues long: Vitamin D(3) 25-hydroxylase (500 aa).

Cysteine 446 provides a ligand contact to heme.

This sequence belongs to the cytochrome P450 family. The cofactor is heme. As to expression, found in liver and kidney.

It is found in the endoplasmic reticulum membrane. The protein resides in the microsome membrane. The enzyme catalyses calciol + reduced [NADPH--hemoprotein reductase] + O2 = calcidiol + oxidized [NADPH--hemoprotein reductase] + H2O + H(+). It catalyses the reaction alfacalcidol + reduced [NADPH--hemoprotein reductase] + O2 = calcitriol + oxidized [NADPH--hemoprotein reductase] + H2O + H(+). The catalysed reaction is dodecanoate + reduced [NADPH--hemoprotein reductase] + O2 = 12-hydroxydodecanoate + oxidized [NADPH--hemoprotein reductase] + H2O + H(+). It carries out the reaction dodecanoate + reduced [NADPH--hemoprotein reductase] + O2 = 11-hydroxydodecanoate + oxidized [NADPH--hemoprotein reductase] + H2O + H(+). The enzyme catalyses 5beta-cholestane-3alpha,7alpha-diol + reduced [NADPH--hemoprotein reductase] + O2 = 5beta-cholestane-3alpha,7alpha,25-triol + oxidized [NADPH--hemoprotein reductase] + H2O + H(+). It catalyses the reaction 5beta-cholestane-3alpha,7alpha,12alpha-triol + reduced [NADPH--hemoprotein reductase] + O2 = 5beta-cholestane-3alpha,7alpha,12alpha,25-tetrol + oxidized [NADPH--hemoprotein reductase] + H2O + H(+). Catalyzes the 25-hydroxylation of vitamin D(3) (calciol), 1alpha-hydroxyvitamin D(3) (alphacalcidiol) and some C27 steroids. In addition the enzyme catalyzes the hydroxylation of positions 11 and 12 of dodecanoate. The polypeptide is Vitamin D(3) 25-hydroxylase (CYP2D25) (Sus scrofa (Pig)).